Consider the following 123-residue polypeptide: Small ribosomal subunit protein uS12 (123 aa).

The residue at position 89 (Asp89) is a 3-methylthioaspartic acid. The disordered stretch occupies residues 104–123; the sequence is SVGVKDRKKSRSKYGAKRPK. Over residues 109-123 the composition is skewed to basic residues; sequence DRKKSRSKYGAKRPK.

It belongs to the universal ribosomal protein uS12 family. In terms of assembly, part of the 30S ribosomal subunit. Contacts proteins S8 and S17. May interact with IF1 in the 30S initiation complex.

Functionally, with S4 and S5 plays an important role in translational accuracy. Interacts with and stabilizes bases of the 16S rRNA that are involved in tRNA selection in the A site and with the mRNA backbone. Located at the interface of the 30S and 50S subunits, it traverses the body of the 30S subunit contacting proteins on the other side and probably holding the rRNA structure together. The combined cluster of proteins S8, S12 and S17 appears to hold together the shoulder and platform of the 30S subunit. This chain is Small ribosomal subunit protein uS12, found in Pelobacter propionicus (strain DSM 2379 / NBRC 103807 / OttBd1).